The following is a 574-amino-acid chain: MAYRIDRQAYAETYGPTTGDRIRLADTELILEVERDFTTYGEEVKFGGGKVIRDGMGQSQQSRANGAVDTVITNALILDWWGIVKADIGLRDGRIVAIGKAGNPDITDGIDIVIGPGTEAIAGEGHIVTAGAIDSHIHFICPQQIETALASGVTTMLGGGTGPATGTNATTCTPGAFHISRMLQAAEGLPMNLGFFGKGNASTAEALEEQVLAGACGLKLHEDWGTTPAAIDCCLSVADRFDVQVCIHTDTLNEAGFVEDTIRAIGGRTIHTFHTEGAGGGHAPDIIRICGESNVLPSSTNPTRPYTRNTLEEHLDMLMVCHHLDPAIPEDVAFAESRIRRETIAAEDILHDLGAFSIIASDSQAMGRVGEVITRTFQTAHKMKVQRGPLPEDAANPRGSRNDNNRIKRYIAKVTINPAIAHGIDNHVGSVEVGKLADLVLWKPGFFGVRPELVIKGGSIIWAQMGDANASIPTPGPVHGRPMFAAFGKALAPSCLTFLSQAAIETDLPNKLGLQRACIPVLNTRTIGKAEMHNNNSLPKVEVDPQTYEVFADGDLLTCDPAEELPMAQRYLLL.

A Urease domain is found at 131–574 (GAIDSHIHFI…LPMAQRYLLL (444 aa)). Ni(2+)-binding residues include His-136, His-138, and Lys-219. Lys-219 carries the N6-carboxylysine modification. Residue His-221 coordinates substrate. Residues His-248 and His-274 each contribute to the Ni(2+) site. His-322 (proton donor) is an active-site residue. Asp-362 contributes to the Ni(2+) binding site. Residues 384 to 403 (KVQRGPLPEDAANPRGSRND) form a disordered region.

Belongs to the metallo-dependent hydrolases superfamily. Urease alpha subunit family. As to quaternary structure, heterotrimer of UreA (gamma), UreB (beta) and UreC (alpha) subunits. Three heterotrimers associate to form the active enzyme. The cofactor is Ni cation. Post-translationally, carboxylation allows a single lysine to coordinate two nickel ions.

The protein resides in the cytoplasm. It catalyses the reaction urea + 2 H2O + H(+) = hydrogencarbonate + 2 NH4(+). The protein operates within nitrogen metabolism; urea degradation; CO(2) and NH(3) from urea (urease route): step 1/1. This is Urease subunit alpha from Prochlorococcus marinus (strain MIT 9313).